Reading from the N-terminus, the 321-residue chain is tRNA U34 carboxymethyltransferase (321 aa).

Carboxy-S-adenosyl-L-methionine is bound by residues lysine 90, tryptophan 104, lysine 109, glycine 129, 151–153, 180–181, methionine 195, tyrosine 199, and arginine 314; these read DPT and IE.

It belongs to the class I-like SAM-binding methyltransferase superfamily. CmoB family. As to quaternary structure, homotetramer.

It catalyses the reaction carboxy-S-adenosyl-L-methionine + 5-hydroxyuridine(34) in tRNA = 5-carboxymethoxyuridine(34) in tRNA + S-adenosyl-L-homocysteine + H(+). Its function is as follows. Catalyzes carboxymethyl transfer from carboxy-S-adenosyl-L-methionine (Cx-SAM) to 5-hydroxyuridine (ho5U) to form 5-carboxymethoxyuridine (cmo5U) at position 34 in tRNAs. This Haemophilus influenzae (strain 86-028NP) protein is tRNA U34 carboxymethyltransferase.